The chain runs to 294 residues: Mimecan (294 aa).

Positions 1–19 (MKTLQAAFFLVAFVPLVKP) are cleaved as a signal peptide. A glycan (N-linked (GlcNAc...) asparagine) is linked at Asn-61. 7 LRR repeats span residues 108–127 (EAVPPLPKETAYLYARFNKI), 128–151 (KRIAVSDFADITTLRRIDFSGNMI), 152–175 (EEIEDGAFSKLLLLEELSLAENRL), 176–195 (VKLPVLPPKLTTFNANQNRI), 196–221 (KSRGIKNNAFKKLTNLAYLYLGHNAL), 222–242 (ESVPLNLPESLRILHLQHNNI), and 243–273 (TTINDDTFCKSNNTRYIRTRMDEIRMEGNPI). Residues Asn-241 and Asn-254 are each glycosylated (N-linked (GlcNAc...) asparagine). Cys-251 and Cys-284 are disulfide-bonded.

The protein belongs to the small leucine-rich proteoglycan (SLRP) family. SLRP class III subfamily. Post-translationally, the composition of the N-linked chains or the substitution of the N-linked sites is different between embryonic and adult tissues. In terms of processing, contains keratan sulfate.

The protein resides in the secreted. Its subcellular location is the extracellular space. It localises to the extracellular matrix. In terms of biological role, induces bone formation in conjunction with TGF-beta-1 or TGF-beta-2. This Gallus gallus (Chicken) protein is Mimecan (OGN).